A 189-amino-acid chain; its full sequence is Putative nucleotidase BC_3386 (189 aa).

It belongs to the 5'(3')-deoxyribonucleotidase family.

The sequence is that of Putative nucleotidase BC_3386 from Bacillus cereus (strain ATCC 14579 / DSM 31 / CCUG 7414 / JCM 2152 / NBRC 15305 / NCIMB 9373 / NCTC 2599 / NRRL B-3711).